The following is a 476-amino-acid chain: Argininosuccinate lyase (476 aa).

Belongs to the lyase 1 family. Argininosuccinate lyase subfamily.

It localises to the cytoplasm. It catalyses the reaction 2-(N(omega)-L-arginino)succinate = fumarate + L-arginine. Its pathway is amino-acid biosynthesis; L-arginine biosynthesis; L-arginine from L-ornithine and carbamoyl phosphate: step 3/3. The sequence is that of Argininosuccinate lyase from Gluconacetobacter diazotrophicus (strain ATCC 49037 / DSM 5601 / CCUG 37298 / CIP 103539 / LMG 7603 / PAl5).